Reading from the N-terminus, the 1395-residue chain is G-protein coupled receptor-associated sorting protein 1 (1395 aa).

Disordered stretches follow at residues 1–25 (MTGA…VVGG), 45–83 (QIMP…AKAI), and 269–288 (TNTW…FRSK). Over residues 269–281 (TNTWSGPREDPNS) the composition is skewed to basic and acidic residues. The residue at position 297 (serine 297) is a Phosphoserine. A disordered region spans residues 446-469 (SMGTGASSKSRPRTDGERIGDSLF). Residues 457–469 (PRTDGERIGDSLF) show a composition bias toward basic and acidic residues. Phosphoserine is present on residues serine 631 and serine 899. The OPRD1-binding stretch occupies residues 899 to 1395 (SETEEETIFG…QNDPEGDQEN (497 aa)).

The protein belongs to the GPRASP family. In terms of assembly, interacts with cytoplasmic tails of a variety of G-protein coupled receptors such as D2 dopamine receptor/DRD2, delta opioid receptor/OPRD1, beta-2 adrenergic receptor/ADRB2 and D4 dopamine receptor/DRD4. Interacts with PER1. Interacts with BECN2; the interaction is direct. As to expression, expressed in the brain, with lower expression in medulla, spinal cord and substantia nigra.

Its subcellular location is the cytoplasm. Functionally, modulates lysosomal sorting and functional down-regulation of a variety of G-protein coupled receptors. Targets receptors for degradation in lysosomes via its interaction with BECN2. This chain is G-protein coupled receptor-associated sorting protein 1 (GPRASP1), found in Homo sapiens (Human).